The sequence spans 155 residues: SsrA-binding protein (155 aa).

The protein belongs to the SmpB family.

It localises to the cytoplasm. Required for rescue of stalled ribosomes mediated by trans-translation. Binds to transfer-messenger RNA (tmRNA), required for stable association of tmRNA with ribosomes. tmRNA and SmpB together mimic tRNA shape, replacing the anticodon stem-loop with SmpB. tmRNA is encoded by the ssrA gene; the 2 termini fold to resemble tRNA(Ala) and it encodes a 'tag peptide', a short internal open reading frame. During trans-translation Ala-aminoacylated tmRNA acts like a tRNA, entering the A-site of stalled ribosomes, displacing the stalled mRNA. The ribosome then switches to translate the ORF on the tmRNA; the nascent peptide is terminated with the 'tag peptide' encoded by the tmRNA and targeted for degradation. The ribosome is freed to recommence translation, which seems to be the essential function of trans-translation. The sequence is that of SsrA-binding protein from Lactococcus lactis subsp. lactis (strain IL1403) (Streptococcus lactis).